The chain runs to 696 residues: Polyphosphate kinase (696 aa).

Asn45 lines the ATP pocket. Mg(2+) contacts are provided by Arg373 and Arg403. The PLD phosphodiesterase domain occupies 428-462 (PGLKIHSKLLMISRREGDDIIRYAHIGTGNFHEKT). Catalysis depends on His433, which acts as the Phosphohistidine intermediate. Residues Tyr466, Arg562, and His590 each coordinate ATP.

The protein belongs to the polyphosphate kinase 1 (PPK1) family. Requires Mg(2+) as cofactor. In terms of processing, an intermediate of this reaction is the autophosphorylated ppk in which a phosphate is covalently linked to a histidine residue through a N-P bond.

The enzyme catalyses [phosphate](n) + ATP = [phosphate](n+1) + ADP. Its function is as follows. Catalyzes the reversible transfer of the terminal phosphate of ATP to form a long-chain polyphosphate (polyP). This is Polyphosphate kinase from Vibrio parahaemolyticus serotype O3:K6 (strain RIMD 2210633).